Here is a 154-residue protein sequence, read N- to C-terminus: uncharacterized protein (154 aa).

The 133-residue stretch at 14-146 (AMNLYRVFAR…LIVLLKKAGI (133 aa)) folds into the HTH marR-type domain. The segment at residues 60–83 (LQQIGSRLLLVSGNVTYVIDKLER) is a DNA-binding region (H-T-H motif).

This is an uncharacterized protein from Bacillus subtilis (strain 168).